The chain runs to 106 residues: Isocitrate dehydrogenase [NAD] subunit gamma, mitochondrial (106 aa).

Belongs to the isocitrate and isopropylmalate dehydrogenases family. As to quaternary structure, heterooligomer of subunits alpha (IDH3A), beta (IDH3B), and gamma (IDH3G) in the apparent ratio of 2:1:1. The heterodimer containing one IDH3A and one IDH3B subunit and the heterodimer containing one IDH3A and one IDH3G subunit assemble into a heterotetramer (which contains two subunits of IDH3A, one of IDH3B and one of IDH3G) and further into the heterooctamer.

The protein localises to the mitochondrion. The heterotetramer and the heterodimer composed of IDH3A and IDH3G subunits can be allosterically activated by citrate (CIT) or/and ADP, and the two activators can act independently or synergistically. The heterodimer composed of IDH3A and IDH3B subunits cannot be allosterically regulated and the allosteric regulation of the heterotetramer is through the IDH3G subunit and not the IDH3B subunit. The IDH3G subunit contains the allosteric site which consists of a CIT-binding site and an ADP-binding site, and the binding of CIT and ADP causes conformational changes at the allosteric site which are transmitted to the active site in the catalytic subunit (IDH3A) through a cascade of conformational changes at the heterodimer interface, leading to stabilization of the isocitrate-binding at the active site and thus activation of the enzyme. ATP can activate the heterotetramer and the heterodimer composed of IDH3A and IDH3G subunits at low concentrations but inhibits their activities at high concentrations, whereas ATP exhibits only inhibitory effect on the heterodimer composed of IDH3A and IDH3B subunits. Regulatory subunit which plays a role in the allosteric regulation of the enzyme catalyzing the decarboxylation of isocitrate (ICT) into alpha-ketoglutarate. The heterodimer composed of the alpha (IDH3A) and beta (IDH3B) subunits and the heterodimer composed of the alpha (IDH3A) and gamma (IDH3G) subunits, have considerable basal activity but the full activity of the heterotetramer (containing two subunits of IDH3A, one of IDH3B and one of IDH3G) requires the assembly and cooperative function of both heterodimers. This chain is Isocitrate dehydrogenase [NAD] subunit gamma, mitochondrial (IDH3G), found in Sus scrofa (Pig).